The chain runs to 1287 residues: Vacuolating cytotoxin autotransporter (1287 aa).

The N-terminal stretch at 1 to 33 (MEIQQTHRKINRPLVSLALVGALVSITPQQSHA) is a signal peptide. Positions 326–381 (PPEGGYKDKPNNTPSQSGAKNDKQESSQNNSNTQVINPPNSTQKTEVQPTQVIDGP) are disordered. Polar residues predominate over residues 351 to 376 (SSQNNSNTQVINPPNSTQKTEVQPTQ). Positions 1014-1287 (KYEKPTNVWA…ASNLGMRYSF (274 aa)) constitute an Autotransporter domain.

Its subcellular location is the periplasm. The protein localises to the secreted. It is found in the cell surface. The protein resides in the cell outer membrane. In terms of biological role, induces vacuolation of eukaryotic cells. Causes ulceration and gastric lesions. The polypeptide is Vacuolating cytotoxin autotransporter (vacA) (Helicobacter pylori (Campylobacter pylori)).